The following is a 134-amino-acid chain: NADH-quinone oxidoreductase subunit A 1 (134 aa).

3 helical membrane passes run 10–30 (LIPLAIYTLFAVGLIGILLLA), 65–85 (FYLIAIFFIVFDVEGAFILAW), and 94–114 (IPGLVHITLFITVLLLGLVWL).

This sequence belongs to the complex I subunit 3 family. As to quaternary structure, NDH-1 is composed of 14 different subunits. Subunits NuoA, H, J, K, L, M, N constitute the membrane sector of the complex.

Its subcellular location is the cell inner membrane. The catalysed reaction is a quinone + NADH + 5 H(+)(in) = a quinol + NAD(+) + 4 H(+)(out). Functionally, NDH-1 shuttles electrons from NADH, via FMN and iron-sulfur (Fe-S) centers, to quinones in the respiratory chain. The immediate electron acceptor for the enzyme in this species is believed to be ubiquinone. Couples the redox reaction to proton translocation (for every two electrons transferred, four hydrogen ions are translocated across the cytoplasmic membrane), and thus conserves the redox energy in a proton gradient. The sequence is that of NADH-quinone oxidoreductase subunit A 1 from Citrifermentans bemidjiense (strain ATCC BAA-1014 / DSM 16622 / JCM 12645 / Bem) (Geobacter bemidjiensis).